The primary structure comprises 348 residues: Arginine kinase Oct f 2 (348 aa).

A Phosphagen kinase N-terminal domain is found at 1–83 (MAEELFKTLQ…LDAVIMDYHK (83 aa)). Substrate is bound at residue 56 to 60 (GVGIY). One can recognise a Phosphagen kinase C-terminal domain in the interval 111–347 (MIVSTRVRVG…NEIIREETNS (237 aa)). ATP is bound by residues 114–118 (STRVR) and histidine 177. Position 217 (glutamate 217) interacts with substrate. Arginine 221 contacts ATP. Substrate is bound at residue cysteine 263. Residues 272–276 (RASVH) and 300–305 (RGIHGE) contribute to the ATP site. Position 305 (glutamate 305) interacts with substrate.

This sequence belongs to the ATP:guanido phosphotransferase family. In terms of tissue distribution, muscle (at protein level).

The catalysed reaction is L-arginine + ATP = N(omega)-phospho-L-arginine + ADP + H(+). In terms of biological role, catalyzes the reversible transfer of high energy ATP gamma-phosphate group to L-arginine. This Amphioctopus fangsiao (Ocellated octopus) protein is Arginine kinase Oct f 2.